The following is a 166-amino-acid chain: Putative peroxiredoxin (166 aa).

The Thioredoxin domain occupies 1–166 (EIGSTIPNAT…SSAATVLSKL (166 aa)). Cys56 serves as the catalytic Cysteine sulfenic acid (-SOH) intermediate. Positions 164 to 166 (SKL) match the Microbody targeting signal motif.

This sequence belongs to the peroxiredoxin family. Prx5 subfamily. As to quaternary structure, homodimer; disulfide-linked, upon oxidation.

The catalysed reaction is a hydroperoxide + [thioredoxin]-dithiol = an alcohol + [thioredoxin]-disulfide + H2O. Thiol-specific peroxidase that catalyzes the reduction of hydrogen peroxide and organic hydroperoxides to water and alcohols, respectively. Plays a role in cell protection against oxidative stress by detoxifying peroxides and as sensor of hydrogen peroxide-mediated signaling events. This is Putative peroxiredoxin from Malassezia furfur (Pityriasis versicolor infection agent).